We begin with the raw amino-acid sequence, 285 residues long: MKYIGAHVSAAGGLANAPARAAEIGATAFALFTKNQRQWRAAPLTPQVIDDFKIACEKYHFSAAQILPHDSYLINLGHPVSEALEKSRDAFLDEMQRCEQLGLTLLNFHPGSHLMQIAQEDCLARIAESINIALAQTEGVTAVIENTAGQGSNLGFEFEQLAAIIDGVEDKSRVGVCIDTCHAFAAGYDLRTPEACEKTFSEFGKIVGFQYLRGMHLNDAKSAFGSRVDRHHSLGEGNIGHDAFRWIMQDGRFDGIPLILETINPDIWAEEIAWLKAQQIAEAMA.

The Zn(2+) site is built by H69, H109, E145, D179, H182, H216, D229, H231, and E261.

This sequence belongs to the AP endonuclease 2 family. Zn(2+) serves as cofactor.

The enzyme catalyses Endonucleolytic cleavage to 5'-phosphooligonucleotide end-products.. Functionally, endonuclease IV plays a role in DNA repair. It cleaves phosphodiester bonds at apurinic or apyrimidinic (AP) sites, generating a 3'-hydroxyl group and a 5'-terminal sugar phosphate. In Salmonella dublin (strain CT_02021853), this protein is Probable endonuclease 4.